We begin with the raw amino-acid sequence, 93 residues long: Parbolysin P5 (93 aa).

Cystine bridges form between cysteine 16–cysteine 37, cysteine 22–cysteine 33, and cysteine 47–cysteine 60.

Belongs to the worm cytolysin family. In terms of tissue distribution, localized within the skin and proboscis and are most readily isolated from body mucus secretions.

The protein resides in the secreted. Its function is as follows. Cytolysin that shows hemolytic activity (on bovine erythrocytes, HC(50)=5.75 mg/ml). This hemolytic activity is completely inhibited by small unilamelar vesicles composed of PC/PG, PC/PI and PC/PS in 1:1 molar ratios (with at least 100 mg/ml concentration). The polypeptide is Parbolysin P5 (Parborlasia corrugatus (Antarctic nemertean worm)).